Here is a 460-residue protein sequence, read N- to C-terminus: GTPase Der (460 aa).

EngA-type G domains follow at residues Lys-9–Gln-171 and Ile-199–Ser-370. GTP contacts are provided by residues Gly-15 to Ser-22, Asp-62 to Met-66, Asn-123 to Asp-126, Gly-205 to Ser-212, Asp-252 to Ile-256, and Asn-316 to Asp-319. The 85-residue stretch at Arg-371–Lys-455 folds into the KH-like domain.

This sequence belongs to the TRAFAC class TrmE-Era-EngA-EngB-Septin-like GTPase superfamily. EngA (Der) GTPase family. Associates with the 50S ribosomal subunit.

Functionally, GTPase that plays an essential role in the late steps of ribosome biogenesis. This Helicobacter pylori (strain G27) protein is GTPase Der.